The primary structure comprises 873 residues: Leucine--tRNA ligase (873 aa).

Positions 42-52 match the 'HIGH' region motif; sequence PYPSGKLHMGH. Positions 624–643 are disordered; it reads PVEIGGTEKMSKSKNNGVDP. The short motif at 632–636 is the 'KMSKS' region element; that stretch reads KMSKS. Residue Lys-635 participates in ATP binding.

It belongs to the class-I aminoacyl-tRNA synthetase family.

It is found in the cytoplasm. The enzyme catalyses tRNA(Leu) + L-leucine + ATP = L-leucyl-tRNA(Leu) + AMP + diphosphate. The sequence is that of Leucine--tRNA ligase from Pseudomonas paraeruginosa (strain DSM 24068 / PA7) (Pseudomonas aeruginosa (strain PA7)).